A 347-amino-acid chain; its full sequence is Phosphate acyltransferase (347 aa).

It belongs to the PlsX family. As to quaternary structure, homodimer. Probably interacts with PlsY.

It is found in the cytoplasm. It carries out the reaction a fatty acyl-[ACP] + phosphate = an acyl phosphate + holo-[ACP]. It participates in lipid metabolism; phospholipid metabolism. In terms of biological role, catalyzes the reversible formation of acyl-phosphate (acyl-PO(4)) from acyl-[acyl-carrier-protein] (acyl-ACP). This enzyme utilizes acyl-ACP as fatty acyl donor, but not acyl-CoA. In Syntrophotalea carbinolica (strain DSM 2380 / NBRC 103641 / GraBd1) (Pelobacter carbinolicus), this protein is Phosphate acyltransferase.